Reading from the N-terminus, the 481-residue chain is MRILQRALTFEDVLMVPRKSSVLPKDVSLKSRLTKNIRLNIPFISAAMDTVTEHKTAIAMARLGGIGIVHKNMDIQTQVKEITKVKKSESGVINDPIFIHAHRTLADAKVITDNYKISGVPVVDDKGLLIGILTNRDVRFETDLSKKVGDVMTKMPLVTAHVGISLDEASDLMHKHKIEKLPIVDKDNVLKGLITIKDIQKRIEYPEANKDDFGRLRVGAAIGVGQLDRAEMLVKAGVDALVLDSAHGHSANILHTLEEIKKSLVVDVIVGNVVTKEATSDLISAGADAIKVGIGPGSICTTRIVAGVGMPQVSAIDNCVEVASKFDIPVIADGGIRYSGDVAKALALGASSVMIGSLLAGTEESPGDFMIYQGRQYKSYRGMGSIGAMTKGSSDRYFQEGVASEKLVPEGIEGRVPYRGKVSDMIFQLVGGVRSSMGYQGAKNILELYQNAEFVEITSAGLKESHVHGVDITKEAPNYYG.

2 CBS domains span residues 92-148 and 152-209; these read VIND…SKKV and MTKM…PEAN. Residues aspartate 244 and 293 to 295 contribute to the NAD(+) site; that span reads GIG. K(+)-binding residues include glycine 295 and glycine 297. Serine 298 lines the IMP pocket. Cysteine 300 serves as a coordination point for K(+). The Thioimidate intermediate role is filled by cysteine 300. Residues 333–335, 356–357, and 380–384 each bind IMP; these read DGG, GS, and YRGMG. Arginine 396 (proton acceptor) is an active-site residue. IMP is bound at residue glutamate 410. Positions 464, 465, and 466 each coordinate K(+).

This sequence belongs to the IMPDH/GMPR family. As to quaternary structure, homotetramer. Requires K(+) as cofactor.

The enzyme catalyses IMP + NAD(+) + H2O = XMP + NADH + H(+). Its pathway is purine metabolism; XMP biosynthesis via de novo pathway; XMP from IMP: step 1/1. Its activity is regulated as follows. Mycophenolic acid (MPA) is a non-competitive inhibitor that prevents formation of the closed enzyme conformation by binding to the same site as the amobile flap. In contrast, mizoribine monophosphate (MZP) is a competitive inhibitor that induces the closed conformation. MPA is a potent inhibitor of mammalian IMPDHs but a poor inhibitor of the bacterial enzymes. MZP is a more potent inhibitor of bacterial IMPDH. Its function is as follows. Catalyzes the conversion of inosine 5'-phosphate (IMP) to xanthosine 5'-phosphate (XMP), the first committed and rate-limiting step in the de novo synthesis of guanine nucleotides, and therefore plays an important role in the regulation of cell growth. The sequence is that of Inosine-5'-monophosphate dehydrogenase from Helicobacter pylori (strain ATCC 700392 / 26695) (Campylobacter pylori).